Reading from the N-terminus, the 144-residue chain is Large ribosomal subunit protein uL13 (144 aa).

This sequence belongs to the universal ribosomal protein uL13 family. In terms of assembly, part of the 50S ribosomal subunit.

This protein is one of the early assembly proteins of the 50S ribosomal subunit, although it is not seen to bind rRNA by itself. It is important during the early stages of 50S assembly. The protein is Large ribosomal subunit protein uL13 of Nitrosospira multiformis (strain ATCC 25196 / NCIMB 11849 / C 71).